Consider the following 570-residue polypeptide: Proline--tRNA ligase (570 aa).

It belongs to the class-II aminoacyl-tRNA synthetase family. ProS type 1 subfamily. In terms of assembly, homodimer.

It localises to the cytoplasm. The catalysed reaction is tRNA(Pro) + L-proline + ATP = L-prolyl-tRNA(Pro) + AMP + diphosphate. Functionally, catalyzes the attachment of proline to tRNA(Pro) in a two-step reaction: proline is first activated by ATP to form Pro-AMP and then transferred to the acceptor end of tRNA(Pro). As ProRS can inadvertently accommodate and process non-cognate amino acids such as alanine and cysteine, to avoid such errors it has two additional distinct editing activities against alanine. One activity is designated as 'pretransfer' editing and involves the tRNA(Pro)-independent hydrolysis of activated Ala-AMP. The other activity is designated 'posttransfer' editing and involves deacylation of mischarged Ala-tRNA(Pro). The misacylated Cys-tRNA(Pro) is not edited by ProRS. The sequence is that of Proline--tRNA ligase from Shewanella sp. (strain MR-4).